The primary structure comprises 117 residues: Non-specific lipid-transfer protein (117 aa).

A signal peptide spans 1-26 (MASSAFVKFTCALVMCMMVAAPLAEA). Disulfide bonds link Cys29–Cys76, Cys39–Cys53, Cys54–Cys99, and Cys74–Cys113.

The protein belongs to the plant LTP family.

In terms of biological role, plant non-specific lipid-transfer proteins transfer phospholipids as well as galactolipids across membranes. May play a role in wax or cutin deposition in the cell walls of expanding epidermal cells and certain secretory tissues. Also has fungicide activity. The sequence is that of Non-specific lipid-transfer protein (IWF1') from Beta vulgaris (Sugar beet).